A 94-amino-acid polypeptide reads, in one-letter code: Co-chaperonin GroES (94 aa).

Belongs to the GroES chaperonin family. As to quaternary structure, heptamer of 7 subunits arranged in a ring. Interacts with the chaperonin GroEL.

The protein localises to the cytoplasm. Functionally, together with the chaperonin GroEL, plays an essential role in assisting protein folding. The GroEL-GroES system forms a nano-cage that allows encapsulation of the non-native substrate proteins and provides a physical environment optimized to promote and accelerate protein folding. GroES binds to the apical surface of the GroEL ring, thereby capping the opening of the GroEL channel. The chain is Co-chaperonin GroES from Streptococcus mitis.